The following is a 513-amino-acid chain: MAEKEEKEPSKLKSSTGVSRPTISLPPRPFGEMFFSGGVGFSPGPMTLVSNLFSDPDEFKSFSQLLAGAMASPAAAAVAAAAVVATAHHQTPVSSVGDGGGSGGDVDPRFKQSRPTGLMITQPPGMFTVPPGLSPATLLDSPSFFGLFSPLQGTFGMTHQQALAQVTAQAVQGNNVHMQQSQQSEYPSSTQQQQQQQQQASLTEIPSFSSAPRSQIRASVQETSQGQRETSEISVFEHRSQPQNADKPADDGYNWRKYGQKQVKGSDFPRSYYKCTHPACPVKKKVERSLDGQVTEIIYKGQHNHELPQKRGNNNGSCKSSDIANQFQTSNSSLNKSKRDQETSQVTTTEQMSEASDSEEVGNAETSVGERHEDEPDPKRRNTEVRVSEPVASSHRTVTEPRIIVQTTSEVDLLDDGYRWRKYGQKVVKGNPYPRSYYKCTTPDCGVRKHVERAATDPKAVVTTYEGKHNHDVPAARTSSHQLRPNNQHNTSTVNFNHQQPVARLRLKEEQIT.

Residues 1-11 show a composition bias toward basic and acidic residues; the sequence is MAEKEEKEPSK. Disordered stretches follow at residues 1-26, 175-281, and 297-394; these read MAEK…ISLP, NVHM…PACP, and IIYK…VASS. A compositionally biased stretch (low complexity) spans 179–201; sequence QQSQQSEYPSSTQQQQQQQQQAS. Residues 202-228 show a composition bias toward polar residues; it reads LTEIPSFSSAPRSQIRASVQETSQGQR. The segment covering 229-240 has biased composition (basic and acidic residues); the sequence is ETSEISVFEHRS. Positions 244–308 form a DNA-binding region, WRKY 1; the sequence is NADKPADDGY…YKGQHNHELP (65 aa). 2 stretches are compositionally biased toward polar residues: residues 311-335 and 343-355; these read RGNN…SSLN and TSQV…MSEA. Residues 368-387 show a composition bias toward basic and acidic residues; the sequence is VGERHEDEPDPKRRNTEVRV. The segment at residues 409–474 is a DNA-binding region (WRKY 2); that stretch reads SEVDLLDDGY…YEGKHNHDVP (66 aa).

In young, mature and senescent leaves.

It is found in the nucleus. Its function is as follows. Transcription factor. Interacts specifically with the W box (5'-(T)TGAC[CT]-3'), a frequently occurring elicitor-responsive cis-acting element. In Arabidopsis thaliana (Mouse-ear cress), this protein is Probable WRKY transcription factor 3 (WRKY3).